Reading from the N-terminus, the 84-residue chain is MNIFDFLRSRKKETTASIAKERLQIIVAHERGQRSQPDYLPALQQELVEVIRKYVNIESDQVQVALENQGSCSILELNITLPDR.

It belongs to the MinE family.

Prevents the cell division inhibition by proteins MinC and MinD at internal division sites while permitting inhibition at polar sites. This ensures cell division at the proper site by restricting the formation of a division septum at the midpoint of the long axis of the cell. The polypeptide is Cell division topological specificity factor (Ectopseudomonas mendocina (strain ymp) (Pseudomonas mendocina)).